A 64-amino-acid chain; its full sequence is U-myrmeciitoxin(01)-Mg4b (64 aa).

A signal peptide spans 1 to 25 (MGKIFFFVLMIAIIGSTFLIEEALG).

This sequence belongs to the ant myrmeciitoxin-01 family. Homodimer; disulfide-linked. Post-translationally, contains 2 intrachain disulfide bonds (per chain) and 1 interchain disulfide bond. As to expression, expressed by the venom gland.

It localises to the secreted. Its function is as follows. May have antimicrobial properties, like most ant linear peptides. The protein is U-myrmeciitoxin(01)-Mg4b of Myrmecia gulosa (Red bulldog ant).